A 151-amino-acid chain; its full sequence is Small ribosomal subunit protein uS13 (151 aa).

It belongs to the universal ribosomal protein uS13 family. Part of the 30S ribosomal subunit. Forms a loose heterodimer with protein S19. Forms two bridges to the 50S subunit in the 70S ribosome.

Located at the top of the head of the 30S subunit, it contacts several helices of the 16S rRNA. In the 70S ribosome it contacts the 23S rRNA (bridge B1a) and protein L5 of the 50S subunit (bridge B1b), connecting the 2 subunits; these bridges are implicated in subunit movement. In Staphylothermus marinus (strain ATCC 43588 / DSM 3639 / JCM 9404 / F1), this protein is Small ribosomal subunit protein uS13.